The following is a 165-amino-acid chain: Myosin regulatory light chain 2A, cardiac muscle isoform (165 aa).

A2 bears the N,N,N-trimethylalanine mark. EF-hand domains follow at residues 24–59 (AQIQ…LGRL), 94–128 (DPEE…QEGR), and 129–164 (FSQE…GEEK). Residues D37, N39, D41, and D48 each coordinate Ca(2+).

Myosin is a hexamer of 2 heavy chains and 4 light chains. The N-terminus is blocked. N,N,N-trimethylalanine, found in other myosin light chains would not have been detected in the N-terminal tryptic peptide in PubMed:7319048 because it would remain trimethylated and ninhydrin negative after hydrolysis.

The sequence is that of Myosin regulatory light chain 2A, cardiac muscle isoform from Gallus gallus (Chicken).